A 469-amino-acid polypeptide reads, in one-letter code: MLCLCLYVPVHISERTEFEYFESESLPVQLKSLFKLSLFLPSQEFDSYRKWRKKVVKAGDKDLDGQLDFEEFVHYLRDHEKKLRLVFKSLDKKNDGHIDSQEIMQSLRDLGVHISEEQAEKILKSMDKNGTMTIDWNEWRDYHLLHPAENIPEIILYWKHSTIFDVGESMLVPDEFTAEEKNTGMWWRHLVAGGGAGAVSRTCTAPLDRLKVLMQVHATRSNSMGIAGGFTQMIREGGLRSLWRGNGINVLKIAPESAIKFMAYEQIKRLIGSNQETLGILERLVSGSLAGAIAQSSIYPMEVLKTRLALGRTGQYSGIADCAKHIFKKEGMTAFYKGYIPNMLGIIPYAGIDLAVYETLKNSWLQRFATDSADPGVFVLLACGTMSSTCGQLASYPLALVRTRMQAQASQEGSPQMTMSGLFRHIVRTEGAIGLYRGLAPNFMKVIPAVSISYVVYENLKITLGVQSR.

Residues 1–189 lie on the Mitochondrial intermembrane side of the membrane; sequence MLCLCLYVPV…EKNTGMWWRH (189 aa). 3 EF-hand domains span residues 47–80, 78–113, and 114–149; these read SYRK…RDHE, DHEK…LGVH, and ISEE…HPAE. Positions 60, 62, 64, 66, and 71 each coordinate Ca(2+). Solcar repeat units follow at residues 184 to 270, 278 to 363, and 375 to 463; these read GMWW…IKRL, LGIL…LKNS, and PGVF…LKIT. A helical transmembrane segment spans residues 190-207; that stretch reads LVAGGGAGAVSRTCTAPL. Topologically, residues 208–244 are mitochondrial matrix; that stretch reads DRLKVLMQVHATRSNSMGIAGGFTQMIREGGLRSLWR. Residues 245 to 264 traverse the membrane as a helical segment; sequence GNGINVLKIAPESAIKFMAY. Residues 265–287 lie on the Mitochondrial intermembrane side of the membrane; sequence EQIKRLIGSNQETLGILERLVSG. Residues 288–301 traverse the membrane as a helical segment; it reads SLAGAIAQSSIYPM. The Mitochondrial matrix segment spans residues 302 to 337; it reads EVLKTRLALGRTGQYSGIADCAKHIFKKEGMTAFYK. A helical membrane pass occupies residues 338 to 357; the sequence is GYIPNMLGIIPYAGIDLAVY. Residues 358–380 are Mitochondrial intermembrane-facing; sequence ETLKNSWLQRFATDSADPGVFVL. Residues 381-398 form a helical membrane-spanning segment; the sequence is LACGTMSSTCGQLASYPL. At 399-437 the chain is on the mitochondrial matrix side; sequence ALVRTRMQAQASQEGSPQMTMSGLFRHIVRTEGAIGLYR. A helical membrane pass occupies residues 438–457; sequence GLAPNFMKVIPAVSISYVVY. Topologically, residues 458 to 469 are mitochondrial intermembrane; that stretch reads ENLKITLGVQSR.

The protein belongs to the mitochondrial carrier (TC 2.A.29) family.

It localises to the mitochondrion inner membrane. Calcium-dependent mitochondrial solute carrier. This is Calcium-binding mitochondrial carrier protein SCaMC-2-B (slc25a25b) from Danio rerio (Zebrafish).